A 399-amino-acid chain; its full sequence is MTTNTVSRKVAWLRVVTLAIAAFIFNTTEFAPVGLLSDIADSFGMETAQVGMMLTIYAWVVALMSLPFMLLTSKVERRRLLIGLFILFIASHVLSFFAWNFDVLVISRIGIAFAHAVFWSITSALAIRMAPPGKRAQALSLIATGTALAMVFGIPIGRIIGQYFGWRMTFLAIGLGALATLACLVKLLPTLPSEHSGSLKSLPVLFRRPALVSVYILTVVVVTAHYTAYSYIEPFVQTVAGLSGNFATVLLLILGGAGIIGSILFGKLGNQHASGLISLAIALLLACLLLLLPASHNPQHLMLLSIFWGVAIMIIGLGMQVKVLASAPDATDVAMSLFSGIFNIGIGAGALVGSQVSLHLSMASVGYVGAIPALVALVWSLMIFRRWPVSLEDHQPHHS.

12 consecutive transmembrane segments (helical) span residues 15-35 (VVTL…PVGL), 50-70 (VGMM…PFML), 81-101 (LIGL…AWNF), 103-123 (VLVI…SITS), 136-156 (AQAL…GIPI), 168-188 (MTFL…VKLL), 209-229 (PALV…YTAY), 246-266 (FATV…ILFG), 273-293 (ASGL…LLLP), 301-321 (LMLL…GMQV), 333-353 (VAMS…ALVG), and 364-384 (SVGY…LMIF).

It belongs to the major facilitator superfamily. SotB (TC 2.A.1.2) family.

The protein resides in the cell inner membrane. Functionally, involved in the efflux of sugars. The physiological role may be the reduction of the intracellular concentration of toxic sugars or sugar metabolites. In Klebsiella pneumoniae subsp. pneumoniae (strain ATCC 700721 / MGH 78578), this protein is Probable sugar efflux transporter.